Here is a 131-residue protein sequence, read N- to C-terminus: Holo-[acyl-carrier-protein] synthase (131 aa).

The Mg(2+) site is built by Asp8 and Glu59.

Belongs to the P-Pant transferase superfamily. AcpS family. Mg(2+) is required as a cofactor.

The protein localises to the cytoplasm. The catalysed reaction is apo-[ACP] + CoA = holo-[ACP] + adenosine 3',5'-bisphosphate + H(+). Transfers the 4'-phosphopantetheine moiety from coenzyme A to a Ser of acyl-carrier-protein. The polypeptide is Holo-[acyl-carrier-protein] synthase (Orientia tsutsugamushi (strain Ikeda) (Rickettsia tsutsugamushi)).